We begin with the raw amino-acid sequence, 66 residues long: COP9 signalosome complex subunit 6a (66 aa).

Belongs to the peptidase M67A family. CSN6 subfamily. As to quaternary structure, component of the CSN complex, probably composed of CSN1, CSN2, CSN3, CSN4, CSN5 (CSN5A or CSN5B), CSN6 (CSN6A or CSN6B), CSN7 and CSN8.

The protein resides in the cytoplasm. The protein localises to the nucleus. Functionally, component of the COP9 signalosome complex (CSN), a complex involved in various cellular and developmental processes such as photomorphogenesis and auxin and jasmonate responses. The CSN complex is an essential regulator of the ubiquitin (Ubl) conjugation pathway by mediating the deneddylation of the cullin subunits of SCF-type E3 ligase complexes, leading to decrease the Ubl ligase activity of SCF. It is involved in repression of photomorphogenesis in darkness by regulating the activity of COP1-containing Ubl ligase complexes. This chain is COP9 signalosome complex subunit 6a (CSN6A), found in Brassica oleracea (Wild cabbage).